A 156-amino-acid chain; its full sequence is Small ribosomal subunit protein uS7 (156 aa).

The protein belongs to the universal ribosomal protein uS7 family. As to quaternary structure, part of the 30S ribosomal subunit. Contacts proteins S9 and S11.

Functionally, one of the primary rRNA binding proteins, it binds directly to 16S rRNA where it nucleates assembly of the head domain of the 30S subunit. Is located at the subunit interface close to the decoding center, probably blocks exit of the E-site tRNA. The protein is Small ribosomal subunit protein uS7 of Pseudomonas entomophila (strain L48).